The primary structure comprises 118 residues: SPbeta prophage-derived uncharacterized protein YomS (118 aa).

This is SPbeta prophage-derived uncharacterized protein YomS (yomS) from Bacillus subtilis (strain 168).